The following is a 567-amino-acid chain: Type II secretion system protein E (567 aa).

Residue 325–332 (GPTGSGKT) coordinates ATP.

It belongs to the GSP E family. In terms of assembly, forms homooligomers; most probably hexamers. Interacts with XpsL/GspL.

The protein localises to the cell inner membrane. The enzyme catalyses ATP + H2O + cellular proteinSide 1 = ADP + phosphate + cellular proteinSide 2.. Functionally, ATPase component of the type II secretion system required for the energy-dependent secretion of extracellular factors such as proteases and toxins from the periplasm. Acts as a molecular motor to provide the energy that is required for assembly of the pseudopilus and the extrusion of substrates generated in the cytoplasm. The sequence is that of Type II secretion system protein E (xpsE) from Xanthomonas campestris pv. campestris (strain ATCC 33913 / DSM 3586 / NCPPB 528 / LMG 568 / P 25).